A 399-amino-acid chain; its full sequence is Ornithine aminotransferase (399 aa).

Lysine 255 carries the post-translational modification N6-(pyridoxal phosphate)lysine.

Belongs to the class-III pyridoxal-phosphate-dependent aminotransferase family. OAT subfamily. It depends on pyridoxal 5'-phosphate as a cofactor.

The protein localises to the cytoplasm. It carries out the reaction a 2-oxocarboxylate + L-ornithine = L-glutamate 5-semialdehyde + an L-alpha-amino acid. The protein operates within amino-acid biosynthesis; L-proline biosynthesis; L-glutamate 5-semialdehyde from L-ornithine: step 1/1. Its function is as follows. Catalyzes the interconversion of ornithine to glutamate semialdehyde. The polypeptide is Ornithine aminotransferase (Brevibacillus brevis (strain 47 / JCM 6285 / NBRC 100599)).